Consider the following 47-residue polypeptide: Putative heat shock protein HSP90 (47 aa).

An ATP-binding site is contributed by R47.

This sequence belongs to the heat shock protein 90 family. As to quaternary structure, homodimer.

It localises to the cytoplasm. Its function is as follows. Putative molecular chaperone that may promote the maturation, structural maintenance and proper regulation of specific target proteins. The sequence is that of Putative heat shock protein HSP90 from Populus euphratica (Euphrates poplar).